Reading from the N-terminus, the 396-residue chain is Gap junction gamma-1 protein (396 aa).

The Cytoplasmic portion of the chain corresponds to 1 to 18 (MSWSFLTRLLEEIHNHST). Residues 19–39 (FVGKIWLTVLIVFRIVLTAVG) traverse the membrane as a helical segment. The Extracellular portion of the chain corresponds to 40–75 (GESIYYDEQSKFVCNTEQPGCENVCYDAFAPLSHVR). A helical transmembrane segment spans residues 76–96 (FWVFQIILVATPSVMYLGYAI). Residues 97–175 (HKIAKMEHGE…RRIREDGLMK (79 aa)) are Cytoplasmic-facing. The segment at 145 to 165 (ELESEKENKEQSQPKPKHDGR) is disordered. The segment covering 147–156 (ESEKENKEQS) has biased composition (basic and acidic residues). A helical membrane pass occupies residues 176 to 198 (IYVLQLLARTVFEVGFLIGQYFL). The Extracellular segment spans residues 199 to 229 (YGFQVHPFYVCSRLPCPHKIDCFISRPTEKT). The chain crosses the membrane as a helical span at residues 230–250 (IFLLIMYGVTGLCLLLNIWEM). Topologically, residues 251 to 396 (LHLGFGTIRD…SGDGKTSVWI (146 aa)) are cytoplasmic. The stretch at 303–358 (ELSNAKIAYKQNKANIAQEQQYGSHEEHLPADLETLQREIRMAQERLDLAIQAYHH) forms a coiled coil. A disordered region spans residues 357 to 396 (HHQNNPHGPREKKAKVGSKSGSNKSSISSKSGDGKTSVWI). Positions 373–396 (GSKSGSNKSSISSKSGDGKTSVWI) are enriched in low complexity.

Belongs to the connexin family. Gamma-type subfamily. In terms of assembly, a connexon is composed of a hexamer of connexins. Interacts with CNST.

The protein localises to the cell membrane. Its subcellular location is the cell junction. The protein resides in the gap junction. In terms of biological role, one gap junction consists of a cluster of closely packed pairs of transmembrane channels, the connexons, through which materials of low MW diffuse from one cell to a neighboring cell. This chain is Gap junction gamma-1 protein (GJC1), found in Cricetulus griseus (Chinese hamster).